The following is a 534-amino-acid chain: MVVVVAAAMAAASLCCGVAAYLYYVLWLAPERLRAHLRRQGIGGPTPSFPYGNLADMRSHAAAAAGGKATGEGRQEGDIVHDYRQAVFPFYENWRKQYGPVFTYSVGNMVFLHVSRPDIVRELSLCVSLDLGKSSYMKATHQPLFGEGILKSNGNAWAHQRKLIAPEFFPDKVKGMVDLMVDSAQVLVSSWEDRIDRSGGNALDLMIDDDIRAYSADVISRTCFGSSYVKGKQIFDMIRELQKTVSTKKQNLLAEMTGLSFLFPKASGRAAWRLNGRVRALILDLVGENGEEDGGNLLSAMLRSARGGGGGGGEVAAAAEDFVVDNCKNIYFAGYESTAVTAAWCLMLLALHPEWQDRVRDEVQAACCGGGGRSPDFPALQKMKNLTMVIQETLRLYPAGAVVSRQALRELSLGGVRVPRGVNIYVPVSTLHLDAELWGGGAGAAEFDPARFADARPPLHAYLPFGAGARTCLGQTFAMAELKVLLSLVLCRFEVALSPEYVHSPAHKLIVEAEHGVRLVLKKVRSKCDWAGFD.

A topological domain (lumenal) is located at residue Met1. Residues 2–22 (VVVVAAAMAAASLCCGVAAYL) form a helical; Signal-anchor for type III membrane protein membrane-spanning segment. Residues 23–534 (YYVLWLAPER…RSKCDWAGFD (512 aa)) are Cytoplasmic-facing. Cys472 provides a ligand contact to heme.

Belongs to the cytochrome P450 family. Heme serves as cofactor. In terms of tissue distribution, highly expressed in spikelet and uppermost internode. Detected in shoots, roots, leaves and anthers.

It is found in the membrane. In terms of biological role, catalyzes the 13-hydroxylation of gibberellins (GAs). Determines the ratio of GA4 and GA1. Converts GA12 into GA53. In Oryza sativa subsp. japonica (Rice), this protein is Cytochrome P450 714B1 (CYP714B1).